A 353-amino-acid polypeptide reads, in one-letter code: Homeobox protein Mohawk (353 aa).

A compositionally biased stretch (basic and acidic residues) spans arginine 18–serine 27. Positions arginine 18–proline 50 are disordered. Residues valine 71–valine 132 constitute a DNA-binding region (homeobox; TALE-type). Disordered stretches follow at residues leucine 157–tyrosine 183 and methionine 243–aspartate 302.

This sequence belongs to the TALE/IRO homeobox family.

The protein resides in the nucleus. May act as a morphogenetic regulator of cell adhesion. Participates in the early events that lead to differentiation. This chain is Homeobox protein Mohawk (Mkx), found in Mus musculus (Mouse).